Reading from the N-terminus, the 353-residue chain is UDP-3-O-acylglucosamine N-acyltransferase (353 aa).

His-242 acts as the Proton acceptor in catalysis.

It belongs to the transferase hexapeptide repeat family. LpxD subfamily. In terms of assembly, homotrimer.

It carries out the reaction a UDP-3-O-[(3R)-3-hydroxyacyl]-alpha-D-glucosamine + a (3R)-hydroxyacyl-[ACP] = a UDP-2-N,3-O-bis[(3R)-3-hydroxyacyl]-alpha-D-glucosamine + holo-[ACP] + H(+). It functions in the pathway bacterial outer membrane biogenesis; LPS lipid A biosynthesis. Its function is as follows. Catalyzes the N-acylation of UDP-3-O-acylglucosamine using 3-hydroxyacyl-ACP as the acyl donor. Is involved in the biosynthesis of lipid A, a phosphorylated glycolipid that anchors the lipopolysaccharide to the outer membrane of the cell. The protein is UDP-3-O-acylglucosamine N-acyltransferase of Pseudomonas paraeruginosa (strain DSM 24068 / PA7) (Pseudomonas aeruginosa (strain PA7)).